The chain runs to 194 residues: Imidazoleglycerol-phosphate dehydratase (194 aa).

This sequence belongs to the imidazoleglycerol-phosphate dehydratase family.

It localises to the cytoplasm. It catalyses the reaction D-erythro-1-(imidazol-4-yl)glycerol 3-phosphate = 3-(imidazol-4-yl)-2-oxopropyl phosphate + H2O. Its pathway is amino-acid biosynthesis; L-histidine biosynthesis; L-histidine from 5-phospho-alpha-D-ribose 1-diphosphate: step 6/9. In Listeria monocytogenes serovar 1/2a (strain ATCC BAA-679 / EGD-e), this protein is Imidazoleglycerol-phosphate dehydratase.